Here is a 77-residue protein sequence, read N- to C-terminus: uncharacterized protein (77 aa).

This is an uncharacterized protein from Bacillus subtilis (strain 168).